The sequence spans 29 residues: Kappa-sparatoxin-Hv1e (29 aa).

3 disulfide bridges follow: cysteine 3/cysteine 17, cysteine 10/cysteine 22, and cysteine 16/cysteine 26.

As to expression, expressed by the venom gland.

It localises to the secreted. Its function is as follows. Inhibitor of voltage-gated potassium channels of the Kv4/KCND family. Blocks calcium channels (Cav). The sequence is that of Kappa-sparatoxin-Hv1e from Heteropoda venatoria (Brown huntsman spider).